Consider the following 243-residue polypeptide: Ribosomal RNA small subunit methyltransferase G (243 aa).

Residues Gly97, Leu102, Val148–Glu149, and Arg161 contribute to the S-adenosyl-L-methionine site.

This sequence belongs to the methyltransferase superfamily. RNA methyltransferase RsmG family.

The protein resides in the cytoplasm. It carries out the reaction guanosine(527) in 16S rRNA + S-adenosyl-L-methionine = N(7)-methylguanosine(527) in 16S rRNA + S-adenosyl-L-homocysteine. Its function is as follows. Specifically methylates the N7 position of guanine in position 527 of 16S rRNA. This is Ribosomal RNA small subunit methyltransferase G from Paracidovorax citrulli (strain AAC00-1) (Acidovorax citrulli).